A 494-amino-acid polypeptide reads, in one-letter code: MASGILVNVKEEVTCPICLELLTQPLSLDCGHSFCQACLTANHKTSMPDEGERSCPVCRISYQHKNIQPNRHVANIVEKLREVKLSPEEGQKVDHCARHGEKLLLFCREDRKVICWLCERSQEHRGHHTFLTEEVAQEYQVKLQAALQMLRQKQQEAEELEADIREEKASWKTQIQYDKTNILADFEQLRHILDWVESNELQNLEKEEKDVLKRLMKSEIEMVQQTQSVRELISDLEHRLQGSVMELLQGVDGVIKRMKNVTLKNPETFPKNQRRVFRAADLKVMLKKLRELRDVQHYWVDVTVAPNNISYAVISEDMRQVSSPEPQIIYEAQGTISQTFVNFNYCTGIRGSQSITSGKHYWEVDVSKKSAWILGVCAGFQPDAMYNIEQNENYQPKYGYWVIGLEERVKCNAFQDGSFHTPSAPFIVPLSVNICPDRVGVFLDYEACTLSFFNITNHGFLIYKFSHCSFSQPVFPYLNPRKCTVPMTLCSPSS.

Alanine 2 carries the post-translational modification N-acetylalanine. Residues 15 to 59 form an RING-type zinc finger; it reads CPICLELLTQPLSLDCGHSFCQACLTANHKTSMPDEGERSCPVCR. Phosphoserine is present on serine 86. A B box-type zinc finger spans residues 91 to 133; it reads QKVDHCARHGEKLLLFCREDRKVICWLCERSQEHRGHHTFLTE. Zn(2+) is bound by residues cysteine 96, histidine 99, cysteine 118, and histidine 124. The stretch at 132–241 forms a coiled coil; it reads TEEVAQEYQV…LISDLEHRLQ (110 aa). Residues 186-199 are required for interaction with GABARAP and for autophagy; it reads FEQLRHILDWVESN. The 213-residue stretch at 282-494 folds into the B30.2/SPRY domain; the sequence is LKVMLKKLRE…VPMTLCSPSS (213 aa).

It belongs to the TRIM/RBCC family. As to quaternary structure, can form homodimers and homotrimers. In addition to lower-order dimerization, also exhibits a higher-order multimerization and both low- and high-order multimerizations are essential for its restriction activity. Interacts with BTBD1 and BTBD2. Interacts with PSMC4, PSMC5, PSMD7 and HSPA8/HSC70. Interacts (via B30.2/SPRY domain) with HSPA1A/B. Interacts with PSMC2, MAP3K7/TAK1, TAB2 and TAB3. Interacts with SQSTM1. Interacts with TRIM6 and TRIM34. Interacts with ULK1 (phosphorylated form), GABARAP, GABARAPL1, GABARAPL2, MAP1LC3A, MAP1LC3C and BECN1. Post-translationally, degraded in a proteasome-independent fashion in the absence of viral infection but in a proteasome-dependent fashion following exposure to restriction sensitive virus. In terms of processing, autoubiquitinated in a RING finger- and UBE2D2-dependent manner. Monoubiquitinated by TRIM21. Deubiquitinated by Yersinia YopJ. Ubiquitination may not lead to proteasomal degradation.

The protein localises to the cytoplasm. The protein resides in the nucleus. The enzyme catalyses S-ubiquitinyl-[E2 ubiquitin-conjugating enzyme]-L-cysteine + [acceptor protein]-L-lysine = [E2 ubiquitin-conjugating enzyme]-L-cysteine + N(6)-ubiquitinyl-[acceptor protein]-L-lysine.. It participates in protein modification; protein ubiquitination. Its function is as follows. Capsid-specific restriction factor that prevents infection from non-host-adapted retroviruses. Blocks viral replication early in the life cycle, after viral entry but before reverse transcription. In addition to acting as a capsid-specific restriction factor, also acts as a pattern recognition receptor that activates innate immune signaling in response to the retroviral capsid lattice. Binding to the viral capsid triggers its E3 ubiquitin ligase activity, and in concert with the heterodimeric ubiquitin conjugating enzyme complex UBE2V1-UBE2N (also known as UBC13-UEV1A complex) generates 'Lys-63'-linked polyubiquitin chains, which in turn are catalysts in the autophosphorylation of the MAP3K7/TAK1 complex (includes TAK1, TAB2, and TAB3). Activation of the MAP3K7/TAK1 complex by autophosphorylation results in the induction and expression of NF-kappa-B and MAPK-responsive inflammatory genes, thereby leading to an innate immune response in the infected cell. Plays a role in regulating autophagy through activation of autophagy regulator BECN1 by causing its dissociation from its inhibitors BCL2 and TAB2. This Nomascus leucogenys (Northern white-cheeked gibbon) protein is Tripartite motif-containing protein 5 (TRIM5).